A 154-amino-acid chain; its full sequence is Jupiter microtubule associated homolog 1 (154 aa).

M1 is modified (N-acetylmethionine). Polar residues predominate over residues 1–19; the sequence is MTTTTTFKGVDPNSRNSSR. The interval 1–154 is disordered; the sequence is MTTTTTFKGV…PGGKSSLVLG (154 aa). T2 carries the N-acetylthreonine; in Hematological and neurological expressed 1 protein, N-terminally processed modification. Phosphoserine is present on residues S28 and S31. T54 is modified (phosphothreonine). 5 positions are modified to phosphoserine: S71, S80, S87, S88, and S92. Residues 80 to 91 are compositionally biased toward polar residues; the sequence is SGPQRRNSSEAN. A compositionally biased stretch (basic and acidic residues) spans 96–108; the sequence is LDLKGEGDVHENV. Residues 125–138 are compositionally biased toward pro residues; it reads PAAPVPSPVAPAPV. S131 carries the post-translational modification Phosphoserine. The residue at position 148 (K148) is an N6-acetyllysine.

The protein belongs to the JUPITER family. Interacts with the complex composed, at least, of APC, CTNNB1 and GSK3B; the interaction takes place with the inactive form of GSK3B (phosphorylated at 'Ser-9').

Its subcellular location is the nucleus. It is found in the cytoplasm. Its function is as follows. Modulates negatively AKT-mediated GSK3B signaling. Induces CTNNB1 'Ser-33' phosphorylation and degradation through the suppression of the inhibitory 'Ser-9' phosphorylation of GSK3B, which represses the function of the APC:CTNNB1:GSK3B complex and the interaction with CDH1/E-cadherin in adherent junctions. Plays a role in the regulation of cell cycle and cell adhesion. Has an inhibitory role on AR-signaling pathway through the induction of receptor proteasomal degradation. This Bos taurus (Bovine) protein is Jupiter microtubule associated homolog 1.